The chain runs to 386 residues: MNIHEYQAKEILSKYNVPIQPGIAILKYEDIDYAIDSLATDTFVIKAQIHAGGRKIGGGIKISNDKNEAKNLAKNMWGMNLVTPQTGPKGQKVQRIYIESAAKIKLELYLGAVIDRSNHCITFMASSAGGINIEEVAHTNPDKIIKVKINILTGIQPFHSRKIIFQLGLTGDLAKQMAKIMSAVYSMLINTDATQVEINPLIITLDDKLIALDAKINFDDSALFRQPLIQGMRDEDEEDHLELRATKADLSYVRMNGNIGCMVNGAGLAMATMDIIKLYGAEPANFLDVGGSADKKRVAEALKIISSDQNVKGILINIFGGIMRCDIIAEGVLAAAKEINLSIPLVVRLAGTNFELGKEILSNSKLQIVAANDLDDAARKIVEAVS.

Positions 46, 99, 102, and 107 each coordinate ATP. Mg(2+) contacts are provided by N199 and D213. Substrate-binding positions include N264 and 321–323; that span reads GIM.

It belongs to the succinate/malate CoA ligase beta subunit family. Heterotetramer of two alpha and two beta subunits. Mg(2+) is required as a cofactor.

The enzyme catalyses succinate + ATP + CoA = succinyl-CoA + ADP + phosphate. It catalyses the reaction GTP + succinate + CoA = succinyl-CoA + GDP + phosphate. It functions in the pathway carbohydrate metabolism; tricarboxylic acid cycle; succinate from succinyl-CoA (ligase route): step 1/1. In terms of biological role, succinyl-CoA synthetase functions in the citric acid cycle (TCA), coupling the hydrolysis of succinyl-CoA to the synthesis of either ATP or GTP and thus represents the only step of substrate-level phosphorylation in the TCA. The beta subunit provides nucleotide specificity of the enzyme and binds the substrate succinate, while the binding sites for coenzyme A and phosphate are found in the alpha subunit. This is Succinate--CoA ligase [ADP-forming] subunit beta from Orientia tsutsugamushi (strain Boryong) (Rickettsia tsutsugamushi).